A 568-amino-acid chain; its full sequence is Adenine deaminase (568 aa).

Belongs to the metallo-dependent hydrolases superfamily. Adenine deaminase family. It depends on Mn(2+) as a cofactor.

It catalyses the reaction adenine + H2O + H(+) = hypoxanthine + NH4(+). The protein is Adenine deaminase of Clostridium perfringens (strain ATCC 13124 / DSM 756 / JCM 1290 / NCIMB 6125 / NCTC 8237 / Type A).